The chain runs to 384 residues: 8-amino-7-oxononanoate synthase (384 aa).

Arg-21 contributes to the substrate binding site. Residue Gly-108–Phe-109 participates in pyridoxal 5'-phosphate binding. His-133 lines the substrate pocket. Pyridoxal 5'-phosphate is bound by residues Ser-179, His-207, and Thr-233. At Lys-236 the chain carries N6-(pyridoxal phosphate)lysine. Residue Thr-352 participates in substrate binding.

The protein belongs to the class-II pyridoxal-phosphate-dependent aminotransferase family. BioF subfamily. In terms of assembly, homodimer. Pyridoxal 5'-phosphate serves as cofactor.

The enzyme catalyses 6-carboxyhexanoyl-[ACP] + L-alanine + H(+) = (8S)-8-amino-7-oxononanoate + holo-[ACP] + CO2. Its pathway is cofactor biosynthesis; biotin biosynthesis. Its function is as follows. Catalyzes the decarboxylative condensation of pimeloyl-[acyl-carrier protein] and L-alanine to produce 8-amino-7-oxononanoate (AON), [acyl-carrier protein], and carbon dioxide. The protein is 8-amino-7-oxononanoate synthase of Enterobacter sp. (strain 638).